The chain runs to 96 residues: Co-chaperonin GroES 2 (96 aa).

It belongs to the GroES chaperonin family. Heptamer of 7 subunits arranged in a ring. Interacts with the chaperonin GroEL.

It localises to the cytoplasm. In terms of biological role, together with the chaperonin GroEL, plays an essential role in assisting protein folding. The GroEL-GroES system forms a nano-cage that allows encapsulation of the non-native substrate proteins and provides a physical environment optimized to promote and accelerate protein folding. GroES binds to the apical surface of the GroEL ring, thereby capping the opening of the GroEL channel. The chain is Co-chaperonin GroES 2 from Vibrio parahaemolyticus serotype O3:K6 (strain RIMD 2210633).